A 388-amino-acid polypeptide reads, in one-letter code: Protein TsgA homolog (388 aa).

12 helical membrane-spanning segments follow: residues 12-32, 51-71, 77-97, 102-122, 137-157, 163-183, 203-223, 246-266, 272-292, 294-314, 331-351, and 356-376; these read CISF…GIFL, TFLN…TNII, LIFG…SHNL, ISMF…TYII, LTDS…ALII, WYWV…ITIN, FSIL…LSFI, SAFW…LKFF, IITL…FYDY, LLYI…TIII, YILT…GPIV, and IFSA…LVII.

It belongs to the major facilitator superfamily. TsgA family.

It is found in the cell membrane. The sequence is that of Protein TsgA homolog from Buchnera aphidicola subsp. Baizongia pistaciae (strain Bp).